The following is a 138-amino-acid chain: Probable lactoylglutathione lyase (138 aa).

Residues 5 to 129 form the VOC domain; sequence RILHTMLRVG…DGYMIELIQN (125 aa). Residue histidine 8 coordinates Ni(2+). A substrate-binding site is contributed by arginine 12. Glutamate 59 contacts Ni(2+). 2 residues coordinate substrate: asparagine 63 and histidine 77. Residues histidine 77 and glutamate 125 each contribute to the Ni(2+) site. Glutamate 125 serves as the catalytic Proton donor/acceptor.

Belongs to the glyoxalase I family. Ni(2+) serves as cofactor.

It carries out the reaction (R)-S-lactoylglutathione = methylglyoxal + glutathione. The protein operates within secondary metabolite metabolism; methylglyoxal degradation; (R)-lactate from methylglyoxal: step 1/2. Its function is as follows. Catalyzes the conversion of hemimercaptal, formed from methylglyoxal and glutathione, to S-lactoylglutathione. The sequence is that of Probable lactoylglutathione lyase (gloA) from Vibrio parahaemolyticus serotype O3:K6 (strain RIMD 2210633).